The chain runs to 313 residues: Homoserine kinase (313 aa).

92 to 102 contacts ATP; that stretch reads PPGRGLGSSGA.

This sequence belongs to the GHMP kinase family. Homoserine kinase subfamily.

The protein resides in the cytoplasm. The enzyme catalyses L-homoserine + ATP = O-phospho-L-homoserine + ADP + H(+). Its pathway is amino-acid biosynthesis; L-threonine biosynthesis; L-threonine from L-aspartate: step 4/5. Catalyzes the ATP-dependent phosphorylation of L-homoserine to L-homoserine phosphate. The polypeptide is Homoserine kinase (Aeropyrum pernix (strain ATCC 700893 / DSM 11879 / JCM 9820 / NBRC 100138 / K1)).